The sequence spans 461 residues: Phosphoglycerate kinase, chloroplastic (461 aa).

The N-terminal 60 residues, M1–A60, are a transit peptide targeting the chloroplast. Residues A82, D83, N85, R100, S122, H123, G125, R126, R182, H214, and R215 each contribute to the (2R)-3-phosphoglycerate site. G260 serves as a coordination point for ADP. G260 provides a ligand contact to CDP. Residues K262 and K266 each contribute to the AMP site. K266 serves as a coordination point for ATP. G284 lines the ADP pocket. Residue G284 participates in CDP binding. AMP contacts are provided by G285 and G357. Residues G285 and G357 each coordinate ATP. Positions 382 and 387 each coordinate CDP. F387 serves as a coordination point for ADP. Residue E388 participates in AMP binding. Residues E388, D419, and S420 each contribute to the ATP site. D419 contacts Mg(2+).

It belongs to the phosphoglycerate kinase family. As to quaternary structure, monomer. It depends on Mg(2+) as a cofactor.

The protein localises to the plastid. It is found in the chloroplast. It catalyses the reaction (2R)-3-phosphoglycerate + ATP = (2R)-3-phospho-glyceroyl phosphate + ADP. It functions in the pathway carbohydrate biosynthesis; Calvin cycle. The polypeptide is Phosphoglycerate kinase, chloroplastic (Chlamydomonas reinhardtii (Chlamydomonas smithii)).